A 248-amino-acid chain; its full sequence is Tyrosine recombinase XerD-like (248 aa).

Positions 1-72 (MKSYIEPFIA…TANQFLYYLY (72 aa)) constitute a Core-binding (CB) domain. Residues 85-248 (DTMKVMRTEK…PVTLEKYYKS (164 aa)) enclose the Tyr recombinase domain. Residues lysine 149 and arginine 213 contribute to the active site. Tyrosine 245 serves as the catalytic O-(3'-phospho-DNA)-tyrosine intermediate.

Belongs to the 'phage' integrase family. XerD-like subfamily.

It is found in the cytoplasm. Functionally, putative tyrosine recombinase. Not involved in the cutting and rejoining of the recombining DNA molecules on dif(SL) site. The polypeptide is Tyrosine recombinase XerD-like (Streptococcus pyogenes serotype M3 (strain ATCC BAA-595 / MGAS315)).